The following is a 1056-amino-acid chain: Outer capsid protein VP5 (1056 aa).

It belongs to the orthoreovirus lambda-2 protein family.

It is found in the virion. It catalyses the reaction a 5'-end diphospho-ribonucleoside in mRNA + GTP + H(+) = a 5'-end (5'-triphosphoguanosine)-ribonucleoside in mRNA + diphosphate. The enzyme catalyses a 5'-end (5'-triphosphoguanosine)-ribonucleoside in mRNA + S-adenosyl-L-methionine = a 5'-end (N(7)-methyl 5'-triphosphoguanosine)-ribonucleoside in mRNA + S-adenosyl-L-homocysteine. In terms of biological role, outer capsid protein involved in mRNA capping. Catalyzes the last 3 enzymatic activities for formation of the 5' cap structure on the viral plus-strand transcripts, namely the RNA guanylyltransferase, RNA-7N- and RNA-2'O-methyltransferase activities. This chain is Outer capsid protein VP5 (S5), found in Aedes pseudoscutellaris reovirus (isolate France) (ApRV).